Consider the following 1244-residue polypeptide: Superkiller complex protein 2 (1244 aa).

The disordered stretch occupies residues 218–249 (LDLSGGDEDEGEAAGGPRGDNASPSPSGTPLV). 2 positions are modified to phosphoserine: serine 242 and serine 253. In terms of domain architecture, Helicase ATP-binding spans 316–472 (ILHLEQHDSV…WIGRLKRRQI (157 aa)). 329–336 (AHTSAGKT) is a binding site for ATP. Positions 420 to 423 (DEVH) match the DEVH box motif. The Helicase C-terminal domain maps to 582–752 (GLTSLDLTTS…LTYTMILNLL (171 aa)).

It belongs to the helicase family. SKI2 subfamily. As to quaternary structure, component of the SKI complex which consists of SKIC2, SKIC3 and SKIC8. Interacts with HBS1L isoform 2.

It localises to the nucleus. The protein localises to the cytoplasm. It catalyses the reaction ATP + H2O = ADP + phosphate + H(+). Helicase component of the SKI complex, a multiprotein complex that assists the RNA-degrading exosome during the mRNA decay and quality-control pathways. The SKI complex catalyzes mRNA extraction from 80S ribosomal complexes in the 3'-5' direction and channels mRNA to the cytosolic exosome for degradation. SKI-mediated extraction of mRNA from stalled ribosomes allow binding of the Pelota-HBS1L complex and subsequent ribosome disassembly by ABCE1 for ribosome recycling. In the nucleus, the SKI complex associates with transcriptionally active genes in a manner dependent on PAF1 complex (PAF1C). The polypeptide is Superkiller complex protein 2 (Mus musculus (Mouse)).